The following is a 35-amino-acid chain: N-acylglucosamine 2-epimerase (35 aa).

A leucine-zipper region spans residues Leu-1–Leu-21.

Belongs to the N-acylglucosamine 2-epimerase family. Homodimer. Forms a heterodimer with renin and inhibits its activity.

The enzyme catalyses an N-acyl-D-glucosamine = an N-acyl-D-mannosamine. It participates in amino-sugar metabolism; N-acetylneuraminate degradation. Functionally, catalyzes the interconversion of N-acetylglucosamine to N-acetylmannosamine. Involved in the N-glycolylneuraminic acid (Neu5Gc) degradation pathway. The chain is N-acylglucosamine 2-epimerase from Canis lupus familiaris (Dog).